A 353-amino-acid chain; its full sequence is Holliday junction branch migration complex subunit RuvB (353 aa).

The interval 1-183 is large ATPase domain (RuvB-L); it reads MNEPRIVAPQ…FGATYRLDFY (183 aa). ATP contacts are provided by residues L22, R23, G64, K67, T68, T69, 130 to 132, R173, Y183, and R220; that span reads EDF. T68 contributes to the Mg(2+) binding site. The tract at residues 184–254 is small ATPAse domain (RuvB-S); that stretch reads DTAALRAIVE…LARLALDQLA (71 aa). The interval 257–353 is head domain (RuvB-H); sequence ELGLDEVDRL…HAASERSSDA (97 aa). DNA contacts are provided by R312 and R317.

The protein belongs to the RuvB family. As to quaternary structure, homohexamer. Forms an RuvA(8)-RuvB(12)-Holliday junction (HJ) complex. HJ DNA is sandwiched between 2 RuvA tetramers; dsDNA enters through RuvA and exits via RuvB. An RuvB hexamer assembles on each DNA strand where it exits the tetramer. Each RuvB hexamer is contacted by two RuvA subunits (via domain III) on 2 adjacent RuvB subunits; this complex drives branch migration. In the full resolvosome a probable DNA-RuvA(4)-RuvB(12)-RuvC(2) complex forms which resolves the HJ.

It is found in the cytoplasm. It catalyses the reaction ATP + H2O = ADP + phosphate + H(+). The RuvA-RuvB-RuvC complex processes Holliday junction (HJ) DNA during genetic recombination and DNA repair, while the RuvA-RuvB complex plays an important role in the rescue of blocked DNA replication forks via replication fork reversal (RFR). RuvA specifically binds to HJ cruciform DNA, conferring on it an open structure. The RuvB hexamer acts as an ATP-dependent pump, pulling dsDNA into and through the RuvAB complex. RuvB forms 2 homohexamers on either side of HJ DNA bound by 1 or 2 RuvA tetramers; 4 subunits per hexamer contact DNA at a time. Coordinated motions by a converter formed by DNA-disengaged RuvB subunits stimulates ATP hydrolysis and nucleotide exchange. Immobilization of the converter enables RuvB to convert the ATP-contained energy into a lever motion, pulling 2 nucleotides of DNA out of the RuvA tetramer per ATP hydrolyzed, thus driving DNA branch migration. The RuvB motors rotate together with the DNA substrate, which together with the progressing nucleotide cycle form the mechanistic basis for DNA recombination by continuous HJ branch migration. Branch migration allows RuvC to scan DNA until it finds its consensus sequence, where it cleaves and resolves cruciform DNA. This chain is Holliday junction branch migration complex subunit RuvB, found in Thermomicrobium roseum (strain ATCC 27502 / DSM 5159 / P-2).